Here is a 146-residue protein sequence, read N- to C-terminus: Snaclec coagulation factor IX/factor X-binding protein subunit B (146 aa).

The N-terminal stretch at 1 to 23 (MGRFIFLSFGLLVVFLSLSGTGA) is a signal peptide. 3 disulfide bridges follow: Cys25–Cys36, Cys53–Cys142, and Cys119–Cys134. Residues 32–143 (YEGHCYKPFN…CRMEAYFVCE (112 aa)) enclose the C-type lectin domain. The Ca(2+) site is built by Ser64 and Glu70. Residue Glu143 coordinates Ca(2+).

It belongs to the snaclec family. Heterodimer with subunit A of IX/X-bp or IX-bp; disulfide-linked. In terms of tissue distribution, expressed by the venom gland.

The protein resides in the secreted. Functionally, when linked to subunit A of IX/X-bp, anticoagulant protein which binds to the gamma-carboxyglutamic acid-domain regions of factors IX (F9) and factor X (F10) in the presence of calcium with a 1 to 1 stoichiometry. Its function is as follows. When linked to subunit A of IX-bp, anticoagulant protein which binds to the gamma-carboxyglutamic acid-domain regions of factor IX (but not to factor X) in the presence of calcium with a 1 to 1 stoichiometry. The chain is Snaclec coagulation factor IX/factor X-binding protein subunit B from Gloydius halys (Chinese water mocassin).